The primary structure comprises 823 residues: ATP-dependent RNA helicase HrpA (823 aa).

Residues 16–179 (IKVLKNHNVL…FNNAPVVSIE (164 aa)) enclose the Helicase ATP-binding domain. ATP is bound at residue 29 to 36 (SPTGSGKT). The DEAH box signature appears at 126–129 (DEAH). The Helicase C-terminal domain occupies 203-374 (KIKEIVLNVI…EVVLRMADIG (172 aa)).

It belongs to the DEAD box helicase family. DEAH subfamily.

It carries out the reaction ATP + H2O = ADP + phosphate + H(+). Functionally, has RNA-stimulated ATPase activity and RNA helicase activity. Involved in global regulation of gene expression. Could be involved in RNA processing and post-transcriptional gene regulation. Essential for both tick transmission and mouse infection. The protein is ATP-dependent RNA helicase HrpA of Borreliella burgdorferi (strain ATCC 35210 / DSM 4680 / CIP 102532 / B31) (Borrelia burgdorferi).